We begin with the raw amino-acid sequence, 419 residues long: Histidine--tRNA ligase (419 aa).

Belongs to the class-II aminoacyl-tRNA synthetase family. Homodimer.

The protein localises to the cytoplasm. The catalysed reaction is tRNA(His) + L-histidine + ATP = L-histidyl-tRNA(His) + AMP + diphosphate + H(+). The protein is Histidine--tRNA ligase of Thiobacillus denitrificans (strain ATCC 25259 / T1).